The chain runs to 81 residues: Putative membrane protein insertion efficiency factor (81 aa).

Positions 59-81 are disordered; it reads PWNPGGYDPVPPIKTSRSSSMAE.

This sequence belongs to the UPF0161 family.

It localises to the cell inner membrane. In terms of biological role, could be involved in insertion of integral membrane proteins into the membrane. This is Putative membrane protein insertion efficiency factor from Azotobacter vinelandii (strain DJ / ATCC BAA-1303).